The sequence spans 157 residues: Transcriptional repressor NrdR (157 aa).

A zinc finger lies at 3–34 (CPFCGHEDTQVKDSRPTDDGTAIRRRRSCTAC). The 91-residue stretch at 49–139 (LIVVKTDQRR…VYRNFSDAGD (91 aa)) folds into the ATP-cone domain.

The protein belongs to the NrdR family. Requires Zn(2+) as cofactor.

Its function is as follows. Negatively regulates transcription of bacterial ribonucleotide reductase nrd genes and operons by binding to NrdR-boxes. This chain is Transcriptional repressor NrdR, found in Granulibacter bethesdensis (strain ATCC BAA-1260 / CGDNIH1).